Reading from the N-terminus, the 377-residue chain is Prostaglandin E synthase 2 (377 aa).

The Lumenal portion of the chain corresponds to 1-65 (MAAACTRTLG…LAAPVRGSGR (65 aa)). Residues 66–83 (VLGCAFLLGGGFGLYQTI) form a helical membrane-spanning segment. The region spanning 105–182 (LKLTLYQYKT…ALKTYISSKD (78 aa)) is the GST N-terminal domain. Glutathione is bound by residues valine 153 and 166–167 (DS). A GST C-terminal domain is found at 266–377 (YIVREGKFGS…RMQKATQHVS (112 aa)).

This sequence belongs to the GST superfamily. As to quaternary structure, homodimer.

It localises to the golgi apparatus membrane. The catalysed reaction is prostaglandin H2 = prostaglandin E2. It carries out the reaction prostaglandin H2 = (12S)-hydroxy-(5Z,8E,10E)-heptadecatrienoate + malonaldehyde. It participates in lipid metabolism; prostaglandin biosynthesis. Its activity is regulated as follows. Isomerase activity is increased by sulfhydril compounds. Dithiothreitol (DTT) is most effective, followed by glutathione (GSH) and 2-mercaptoethanol. Functionally, isomerase that catalyzes the conversion of PGH2 into the more stable prostaglandin E2 (PGE2) (in vitro). The biological function and the GSH-dependent property of PTGES2 is still under debate. In vivo, PTGES2 could form a complex with GSH and heme and would not participate in PGE2 synthesis but would catalyze the degradation of prostaglandin E2 H2 (PGH2) to 12(S)-hydroxy-5(Z),8(E),10(E)-heptadecatrienoic acid (HHT) and malondialdehyde (MDA). In Danio rerio (Zebrafish), this protein is Prostaglandin E synthase 2 (ptges2).